The chain runs to 1339 residues: DNA polymerase alpha catalytic subunit (1339 aa).

2 disordered regions span residues 1-29 (MEDW…SEEE) and 60-89 (AKRR…HQQK). The span at 8 to 19 (RSEEQKRCEEKG) shows a compositional bias: basic and acidic residues. Cys1179, Cys1182, Cys1215, Cys1218, Cys1235, Cys1244, Cys1274, and Cys1289 together coordinate Zn(2+). A CysA-type zinc finger spans residues 1179–1218 (CTHCQLVVPVDPHKYINDMFSSREKPPPTAPFELYVCFNC). A CysB motif motif is present at residues 1244-1274 (CSGGNVASVRALRAQFTYLRAMFDVPQALNC).

It belongs to the DNA polymerase type-B family.

The protein resides in the nucleus. It catalyses the reaction DNA(n) + a 2'-deoxyribonucleoside 5'-triphosphate = DNA(n+1) + diphosphate. Its function is as follows. Polymerase alpha in a complex with DNA primase is a replicative polymerase. The sequence is that of DNA polymerase alpha catalytic subunit from Trypanosoma brucei brucei.